The chain runs to 634 residues: Beta-ketoacyl-[acyl-carrier-protein] synthase FabY (634 aa).

A Ketosynthase family 3 (KS3) domain is found at 78-546 (ERIFASTLVR…GNNASGVVLS (469 aa)). Catalysis depends on for beta-ketoacyl synthase activity residues Cys-281, His-434, and His-472.

It belongs to the thiolase-like superfamily. Beta-ketoacyl-ACP synthases family. Homodimer.

The catalysed reaction is malonyl-[ACP] + acetyl-CoA + H(+) = 3-oxobutanoyl-[ACP] + CO2 + CoA. Its pathway is lipid metabolism; fatty acid biosynthesis. Its function is as follows. Involved in the initiation of the fatty acid biosynthesis. Catalyzes the condensation of acetyl coenzyme A (acetyl-CoA) with malonyl-acyl carrier protein (ACP) to make the fatty acid synthesis (FAS) primer beta-acetoacetyl-ACP. It can also use short-chain acyl-CoA as substrates, including butyryl-CoA, and hexanoyl-CoA, but does not use any of the longer chain acyl-CoA substrates. The polypeptide is Beta-ketoacyl-[acyl-carrier-protein] synthase FabY (fabY) (Pseudomonas aeruginosa (strain ATCC 15692 / DSM 22644 / CIP 104116 / JCM 14847 / LMG 12228 / 1C / PRS 101 / PAO1)).